The chain runs to 162 residues: Precorrin-2 dehydrogenase (162 aa).

NAD(+) is bound by residues 20–21 (SI) and 41–42 (PD).

Belongs to the precorrin-2 dehydrogenase / sirohydrochlorin ferrochelatase family.

It carries out the reaction precorrin-2 + NAD(+) = sirohydrochlorin + NADH + 2 H(+). Its pathway is cofactor biosynthesis; adenosylcobalamin biosynthesis; sirohydrochlorin from precorrin-2: step 1/1. It participates in porphyrin-containing compound metabolism; siroheme biosynthesis; sirohydrochlorin from precorrin-2: step 1/1. Catalyzes the dehydrogenation of precorrin-2 to form sirohydrochlorin which is used as a precursor in both siroheme biosynthesis and in the anaerobic branch of adenosylcobalamin biosynthesis. The protein is Precorrin-2 dehydrogenase (sirC) of Bacillus subtilis (strain 168).